An 878-amino-acid chain; its full sequence is F-box DNA helicase protein 1 (878 aa).

One can recognise an F-box domain in the interval 8-56; sequence SCKFYRLPLEIIPLICRFLSVQDIQSFIRVFPSFQTILDSSNDLFWKKK.

It belongs to the helicase family. UvrD subfamily. Part of the E3 ubiquitin ligase Skp1-Cullin-1-F-box (SCF) complex. Interacts with skp1 and ssb1. It depends on Mg(2+) as a cofactor. Requires Mn(2+) as cofactor.

Its subcellular location is the cytoplasm. It is found in the nucleus. The enzyme catalyses Couples ATP hydrolysis with the unwinding of duplex DNA by translocating in the 3'-5' direction.. It catalyses the reaction ATP + H2O = ADP + phosphate + H(+). It functions in the pathway protein modification; protein ubiquitination. Involved in ATP-dependent DNA-unwinding in a 3' to 5' direction, and ATP-ase activities stimulated by the single-stranded DNA-binding protein ssb1. Essential for viability and normal growth of stationary phase cells and in the absence of either srs2 or rqh1 DNA helicase. Involved in DNA recombination repair of strand breaks and stalled or collapsed replication forks, on the rhp51-dependent pathway: promotes rhp51 filament dissolution from stalled forks, thereby inhibiting homologous recombination and preventing excessive recombination. Ubiquitination and DNA helicase activities are essential for controlling rhp51-dependent recombination in the absence of rad22. Plays a role in the processing of toxic recombination intermediates. Promotes proper chromosome segregation. The chain is F-box DNA helicase protein 1 (fbh1) from Schizosaccharomyces pombe (strain 972 / ATCC 24843) (Fission yeast).